A 145-amino-acid polypeptide reads, in one-letter code: D-aminoacyl-tRNA deacylase (145 aa).

A Gly-cisPro motif, important for rejection of L-amino acids motif is present at residues 137–138; sequence GP.

It belongs to the DTD family. As to quaternary structure, homodimer.

The protein resides in the cytoplasm. It carries out the reaction glycyl-tRNA(Ala) + H2O = tRNA(Ala) + glycine + H(+). It catalyses the reaction a D-aminoacyl-tRNA + H2O = a tRNA + a D-alpha-amino acid + H(+). Functionally, an aminoacyl-tRNA editing enzyme that deacylates mischarged D-aminoacyl-tRNAs. Also deacylates mischarged glycyl-tRNA(Ala), protecting cells against glycine mischarging by AlaRS. Acts via tRNA-based rather than protein-based catalysis; rejects L-amino acids rather than detecting D-amino acids in the active site. By recycling D-aminoacyl-tRNA to D-amino acids and free tRNA molecules, this enzyme counteracts the toxicity associated with the formation of D-aminoacyl-tRNA entities in vivo and helps enforce protein L-homochirality. The protein is D-aminoacyl-tRNA deacylase of Salmonella typhimurium (strain LT2 / SGSC1412 / ATCC 700720).